Reading from the N-terminus, the 415-residue chain is Multidrug resistance protein MdtA (415 aa).

The N-terminal stretch at methionine 1 to alanine 21 is a signal peptide. Residues alanine 387–serine 415 are disordered. The span at alanine 394–proline 403 shows a compositional bias: basic and acidic residues.

Belongs to the membrane fusion protein (MFP) (TC 8.A.1) family. Part of a tripartite efflux system composed of MdtA, MdtB and MdtC.

It localises to the cell inner membrane. The sequence is that of Multidrug resistance protein MdtA from Cronobacter turicensis (strain DSM 18703 / CCUG 55852 / LMG 23827 / z3032).